A 229-amino-acid chain; its full sequence is Potassium/proton antiporter CemA (229 aa).

4 consecutive transmembrane segments (helical) span residues 7–27 (FTPL…SLSF), 114–134 (ITCF…LVIL), 154–174 (ILLL…ELMI), and 189–209 (IISG…KYWI).

This sequence belongs to the CemA family.

The protein localises to the plastid. It localises to the chloroplast inner membrane. The catalysed reaction is K(+)(in) + H(+)(out) = K(+)(out) + H(+)(in). Its function is as follows. Contributes to K(+)/H(+) antiport activity by supporting proton efflux to control proton extrusion and homeostasis in chloroplasts in a light-dependent manner to modulate photosynthesis. Prevents excessive induction of non-photochemical quenching (NPQ) under continuous-light conditions. Indirectly promotes efficient inorganic carbon uptake into chloroplasts. This chain is Potassium/proton antiporter CemA, found in Platanus occidentalis (Sycamore).